A 105-amino-acid chain; its full sequence is SH3 domain-binding glutamic acid-rich-like protein 2 (105 aa).

Residues 61-67 carry the SH3-binding motif; sequence KGNPLPP.

Belongs to the SH3BGR family.

The protein resides in the nucleus. This chain is SH3 domain-binding glutamic acid-rich-like protein 2 (sh3bgrl2), found in Danio rerio (Zebrafish).